A 239-amino-acid polypeptide reads, in one-letter code: Protein-S-isoprenylcysteine O-methyltransferase (239 aa).

The Cytoplasmic segment spans residues 1 to 23; it reads MHQDFQEDEHEYPDIRRNPLHEV. Residues 24–44 traverse the membrane as a helical segment; sequence TMTSYILGILLGIFVGLFPQI. The Lumenal segment spans residues 45-47; it reads RFK. Residues 48–68 traverse the membrane as a helical segment; it reads NFNLFIIALSLFHFLEYYITA. The Cytoplasmic segment spans residues 69–88; sequence KYNPLKVHSESFLLNNGKSY. A helical transmembrane segment spans residues 89 to 109; the sequence is MAAHSFAILECLVESFLFPDL. Lysine 110 is a topological domain (lumenal). A helical membrane pass occupies residues 111 to 131; sequence IFSYSLATKLCTVLGCLLVIL. Residues 132–175 lie on the Cytoplasmic side of the membrane; it reads GQYTRTIAMHTAGHSFSHIVKTKKESDHVLVKTGVYSWSRHPSY. S-adenosyl-L-methionine is bound by residues 159–162, tyrosine 167, and 172–175; these read HVLV and HPSY. The segment at residues 176–206 is an intramembrane region (helical); that stretch reads LGFFWWAIGTQLLLLNPLSLVIFIFVLWKFF. Residues 207–239 lie on the Cytoplasmic side of the membrane; sequence SDRIRVEEKYLIEFFSAEYIEYKNKVGVGIPFI. Arginine 209 serves as a coordination point for substrate. Glutamate 213 is an S-adenosyl-L-methionine binding site.

Belongs to the class VI-like SAM-binding methyltransferase superfamily. Isoprenylcysteine carboxyl methyltransferase family.

The protein localises to the endoplasmic reticulum membrane. The catalysed reaction is [protein]-C-terminal S-[(2E,6E)-farnesyl]-L-cysteine + S-adenosyl-L-methionine = [protein]-C-terminal S-[(2E,6E)-farnesyl]-L-cysteine methyl ester + S-adenosyl-L-homocysteine. Its function is as follows. Mediates C-terminal methylation of the isoprenylated C-terminal cysteine in A-factor mating pheromone and Ras proteins. Does not have a preference for the farnesyl or geranylgeranyl moieties in the model substrates N-acetyl-S-farnesyl-L-cysteine (AFC) and N-acetyl-S-geranylgeranyl-L-cysteine (AGGC) in vitro. The polypeptide is Protein-S-isoprenylcysteine O-methyltransferase (STE14) (Saccharomyces cerevisiae (strain ATCC 204508 / S288c) (Baker's yeast)).